Consider the following 342-residue polypeptide: tRNA N6-adenosine threonylcarbamoyltransferase (342 aa).

His111 and His115 together coordinate Fe cation. Substrate-binding positions include 134 to 138 (LVSGG), Asp167, Gly180, and Asn274. Asp302 is a binding site for Fe cation.

The protein belongs to the KAE1 / TsaD family. Fe(2+) serves as cofactor.

Its subcellular location is the cytoplasm. The enzyme catalyses L-threonylcarbamoyladenylate + adenosine(37) in tRNA = N(6)-L-threonylcarbamoyladenosine(37) in tRNA + AMP + H(+). Required for the formation of a threonylcarbamoyl group on adenosine at position 37 (t(6)A37) in tRNAs that read codons beginning with adenine. Is involved in the transfer of the threonylcarbamoyl moiety of threonylcarbamoyl-AMP (TC-AMP) to the N6 group of A37, together with TsaE and TsaB. TsaD likely plays a direct catalytic role in this reaction. The protein is tRNA N6-adenosine threonylcarbamoyltransferase of Herminiimonas arsenicoxydans.